Reading from the N-terminus, the 363-residue chain is Chorismate synthase (363 aa).

Positions 48 and 54 each coordinate NADP(+). Residues 125–127, 237–238, Gly277, 292–296, and Arg318 contribute to the FMN site; these read RSS, NA, and KPTSS.

Belongs to the chorismate synthase family. As to quaternary structure, homotetramer. Requires FMNH2 as cofactor.

The catalysed reaction is 5-O-(1-carboxyvinyl)-3-phosphoshikimate = chorismate + phosphate. It participates in metabolic intermediate biosynthesis; chorismate biosynthesis; chorismate from D-erythrose 4-phosphate and phosphoenolpyruvate: step 7/7. Functionally, catalyzes the anti-1,4-elimination of the C-3 phosphate and the C-6 proR hydrogen from 5-enolpyruvylshikimate-3-phosphate (EPSP) to yield chorismate, which is the branch point compound that serves as the starting substrate for the three terminal pathways of aromatic amino acid biosynthesis. This reaction introduces a second double bond into the aromatic ring system. This Pseudomonas putida (strain ATCC 700007 / DSM 6899 / JCM 31910 / BCRC 17059 / LMG 24140 / F1) protein is Chorismate synthase.